We begin with the raw amino-acid sequence, 186 residues long: Ribosome-recycling factor (186 aa).

Residues 144–163 (EKDGVIGQDESRAQSERVQK) form a disordered region.

The protein belongs to the RRF family.

It is found in the cytoplasm. Functionally, responsible for the release of ribosomes from messenger RNA at the termination of protein biosynthesis. May increase the efficiency of translation by recycling ribosomes from one round of translation to another. The protein is Ribosome-recycling factor of Rhizobium etli (strain CIAT 652).